The following is a 178-amino-acid chain: GTP-dependent dephospho-CoA kinase (178 aa).

The GTP site is built by Asp43, Ile44, Val45, Asp62, Lys64, and Glu120.

It belongs to the GTP-dependent DPCK family.

It catalyses the reaction 3'-dephospho-CoA + GTP = GDP + CoA + H(+). The protein operates within cofactor biosynthesis; coenzyme A biosynthesis. Functionally, catalyzes the GTP-dependent phosphorylation of the 3'-hydroxyl group of dephosphocoenzyme A to form coenzyme A (CoA). The protein is GTP-dependent dephospho-CoA kinase of Natronomonas pharaonis (strain ATCC 35678 / DSM 2160 / CIP 103997 / JCM 8858 / NBRC 14720 / NCIMB 2260 / Gabara) (Halobacterium pharaonis).